The following is a 687-amino-acid chain: Methionine--tRNA ligase (687 aa).

A 'HIGH' region motif is present at residues 14–24 (PYANGYIHLGH). Residues C145, C148, C158, and C161 each coordinate Zn(2+). The 'KMSKS' region signature appears at 329-333 (KMSKS). Residue K332 participates in ATP binding. One can recognise a tRNA-binding domain in the interval 585–687 (DFDKVDLRIG…DGAQVGQRVK (103 aa)).

The protein belongs to the class-I aminoacyl-tRNA synthetase family. MetG type 1 subfamily. In terms of assembly, homodimer. Zn(2+) is required as a cofactor.

The protein localises to the cytoplasm. It carries out the reaction tRNA(Met) + L-methionine + ATP = L-methionyl-tRNA(Met) + AMP + diphosphate. Its function is as follows. Is required not only for elongation of protein synthesis but also for the initiation of all mRNA translation through initiator tRNA(fMet) aminoacylation. The protein is Methionine--tRNA ligase of Bdellovibrio bacteriovorus (strain ATCC 15356 / DSM 50701 / NCIMB 9529 / HD100).